A 410-amino-acid polypeptide reads, in one-letter code: Divergent protein kinase domain 1A (410 aa).

Topologically, residues M1–S5 are cytoplasmic. A helical membrane pass occupies residues Y6–I26. Topologically, residues Y27–S410 are lumenal.

The protein belongs to the DIPK family. In terms of processing, among the many cysteines in the lumenal domain, most are probably involved in disulfide bonds.

Its subcellular location is the endoplasmic reticulum membrane. The protein is Divergent protein kinase domain 1A (dipk1a) of Xenopus laevis (African clawed frog).